Here is a 288-residue protein sequence, read N- to C-terminus: S-methyl-5'-thioadenosine phosphorylase (288 aa).

Phosphate-binding positions include serine 12, arginine 54–histidine 55, and serine 87–alanine 88. Residue methionine 186 participates in substrate binding. Threonine 187 is a phosphate binding site. Aspartate 210–aspartate 212 provides a ligand contact to substrate.

It belongs to the PNP/MTAP phosphorylase family. MTAP subfamily. Homohexamer. Dimer of a homotrimer.

The enzyme catalyses S-methyl-5'-thioadenosine + phosphate = 5-(methylsulfanyl)-alpha-D-ribose 1-phosphate + adenine. Its pathway is amino-acid biosynthesis; L-methionine biosynthesis via salvage pathway; S-methyl-5-thio-alpha-D-ribose 1-phosphate from S-methyl-5'-thioadenosine (phosphorylase route): step 1/1. Its function is as follows. Catalyzes the reversible phosphorylation of S-methyl-5'-thioadenosine (MTA) to adenine and 5-methylthioribose-1-phosphate. Involved in the breakdown of MTA, a major by-product of polyamine biosynthesis. Responsible for the first step in the methionine salvage pathway after MTA has been generated from S-adenosylmethionine. Has broad substrate specificity with 6-aminopurine nucleosides as preferred substrates. This chain is S-methyl-5'-thioadenosine phosphorylase, found in Chloroflexus aurantiacus (strain ATCC 29366 / DSM 635 / J-10-fl).